A 387-amino-acid chain; its full sequence is Natterin-4 (387 aa).

Residues M1–A18 form the signal peptide. A propeptide spanning residues E19 to Q46 is cleaved from the precursor. Over residues N31 to L40 the composition is skewed to basic and acidic residues. Positions N31–Q57 are disordered.

This sequence belongs to the natterin family. Contains 4 disulfide bonds. As to expression, expressed by the venom gland.

It is found in the secreted. With respect to regulation, inhibited by tissue-kallikrein inhibitor TKI and trasylol. Plasma kallikrein inhibitor PKSI527 and classical inhibitors of serine-, metallo-, thiol- or aspartate-peptidases evokes a minor inhibition of the peptide digestion. Functionally, shows nociceptive, edema-inducing and kininogenase activity with release of kallidin from low molecular weight kininogen. The cleavage occurs at Met-Lys bonds. This chain is Natterin-4, found in Thalassophryne nattereri (Copper Joe toadfish).